We begin with the raw amino-acid sequence, 157 residues long: MGIMLDETDKAILRDLQEDASISNLNLSKKIGLSPSACLARTKNLVEAGIIKKFTTIVDEKKLGIEVTALALINLSPLNRETIHSFLEDINKFPQVQECYTLTGSHDYMLKIVAKDMESYRNFIIDSLMQNPAISGVDTSIVMSTEKRTVSVPIDEM.

One can recognise an HTH asnC-type domain in the interval 5–66 (LDETDKAILR…IVDEKKLGIE (62 aa)). The H-T-H motif DNA-binding region spans 24–43 (NLNLSKKIGLSPSACLARTK).

Its function is as follows. Transcriptional repressor of the azlBCD operon involved in branched-chain amino acid transport. This is Transcriptional regulator AzlB (azlB) from Bacillus subtilis (strain 168).